The primary structure comprises 338 residues: Holliday junction branch migration complex subunit RuvB (338 aa).

A large ATPase domain (RuvB-L) region spans residues 1 to 181 (MDRIVEIEKV…FGMDFRLQFY (181 aa)). ATP contacts are provided by residues leucine 20, arginine 21, glycine 62, lysine 65, threonine 66, threonine 67, 128–130 (EDF), arginine 171, tyrosine 181, and arginine 218. A Mg(2+)-binding site is contributed by threonine 66. A small ATPAse domain (RuvB-S) region spans residues 182–252 (STAELSRIIQ…RAKEGLNALG (71 aa)). Residues 255 to 338 (SLGFDEMDIK…NRTKGLFDGE (84 aa)) are head domain (RuvB-H). DNA is bound by residues arginine 309 and arginine 314.

Belongs to the RuvB family. In terms of assembly, homohexamer. Forms an RuvA(8)-RuvB(12)-Holliday junction (HJ) complex. HJ DNA is sandwiched between 2 RuvA tetramers; dsDNA enters through RuvA and exits via RuvB. An RuvB hexamer assembles on each DNA strand where it exits the tetramer. Each RuvB hexamer is contacted by two RuvA subunits (via domain III) on 2 adjacent RuvB subunits; this complex drives branch migration. In the full resolvosome a probable DNA-RuvA(4)-RuvB(12)-RuvC(2) complex forms which resolves the HJ.

It is found in the cytoplasm. It catalyses the reaction ATP + H2O = ADP + phosphate + H(+). In terms of biological role, the RuvA-RuvB-RuvC complex processes Holliday junction (HJ) DNA during genetic recombination and DNA repair, while the RuvA-RuvB complex plays an important role in the rescue of blocked DNA replication forks via replication fork reversal (RFR). RuvA specifically binds to HJ cruciform DNA, conferring on it an open structure. The RuvB hexamer acts as an ATP-dependent pump, pulling dsDNA into and through the RuvAB complex. RuvB forms 2 homohexamers on either side of HJ DNA bound by 1 or 2 RuvA tetramers; 4 subunits per hexamer contact DNA at a time. Coordinated motions by a converter formed by DNA-disengaged RuvB subunits stimulates ATP hydrolysis and nucleotide exchange. Immobilization of the converter enables RuvB to convert the ATP-contained energy into a lever motion, pulling 2 nucleotides of DNA out of the RuvA tetramer per ATP hydrolyzed, thus driving DNA branch migration. The RuvB motors rotate together with the DNA substrate, which together with the progressing nucleotide cycle form the mechanistic basis for DNA recombination by continuous HJ branch migration. Branch migration allows RuvC to scan DNA until it finds its consensus sequence, where it cleaves and resolves cruciform DNA. This Campylobacter curvus (strain 525.92) protein is Holliday junction branch migration complex subunit RuvB.